Consider the following 702-residue polypeptide: 1,4-alpha-glucan-branching enzyme (702 aa).

N-acetylalanine is present on Ala2. Substrate is bound by residues 62-63 and 91-93; these read NE and WAP. Residue Trp107 participates in (1,4-alpha-D-glucosyl)n binding. Substrate is bound at residue 118–121; the sequence is EYGK. Lys143 contributes to the (1,4-alpha-D-glucosyl)n binding site. Tyr173 is subject to Phosphotyrosine. 333–336 is a binding site for substrate; the sequence is EVLR. The active-site Nucleophile is the Asp357. Residue Glu412 is the Proton donor of the active site.

It belongs to the glycosyl hydrolase 13 family. GlgB subfamily. Monomer.

It carries out the reaction Transfers a segment of a (1-&gt;4)-alpha-D-glucan chain to a primary hydroxy group in a similar glucan chain.. The protein operates within glycan biosynthesis; glycogen biosynthesis. Glycogen-branching enzyme participates in the glycogen biosynthetic process along with glycogenin and glycogen synthase. Generates alpha-1,6-glucosidic branches from alpha-1,4-linked glucose chains, to increase solubility of the glycogen polymer. The sequence is that of 1,4-alpha-glucan-branching enzyme (Gbe1) from Mus musculus (Mouse).